A 570-amino-acid polypeptide reads, in one-letter code: Methionine--tRNA ligase (570 aa).

The 'HIGH' region motif lies at 11–21 (PYVQTVPHLGN). Zn(2+) is bound by residues C143, C146, C156, and C159. The 'KMSKS' region signature appears at 333 to 337 (KFSKS). ATP is bound at residue K336.

This sequence belongs to the class-I aminoacyl-tRNA synthetase family. MetG type 1 subfamily. Zn(2+) is required as a cofactor.

The protein localises to the cytoplasm. The enzyme catalyses tRNA(Met) + L-methionine + ATP = L-methionyl-tRNA(Met) + AMP + diphosphate. Is required not only for elongation of protein synthesis but also for the initiation of all mRNA translation through initiator tRNA(fMet) aminoacylation. The polypeptide is Methionine--tRNA ligase (Pyrobaculum calidifontis (strain DSM 21063 / JCM 11548 / VA1)).